Reading from the N-terminus, the 151-residue chain is Ribosome maturation factor RimP (151 aa).

Belongs to the RimP family.

The protein localises to the cytoplasm. Required for maturation of 30S ribosomal subunits. This is Ribosome maturation factor RimP from Caldicellulosiruptor bescii (strain ATCC BAA-1888 / DSM 6725 / KCTC 15123 / Z-1320) (Anaerocellum thermophilum).